The chain runs to 519 residues: Developmental regulatory protein wetA (519 aa).

Disordered stretches follow at residues 105–165 (PSRP…MRSS), 270–294 (PSSA…WQSD), 301–320 (LSFT…PMPS), 325–344 (QQAS…NVGN), 389–452 (SQIH…GSNK), and 470–495 (LTGV…RRRK). Positions 108–118 (PTATHALSTSP) are enriched in low complexity. Polar residues predominate over residues 155-165 (QSFSPSLMRSS). The segment covering 301–315 (LSFTPDLQGQDSQWW) has biased composition (polar residues). The segment covering 389-400 (SQIHNVSRSPSL) has biased composition (polar residues). Over residues 419-428 (PTHRRTHSRK) the composition is skewed to basic residues. The span at 435-452 (NAPKPAKASGSSSRGSNK) shows a compositional bias: low complexity.

Belongs to the wetA family.

In terms of biological role, brlA, abaA and wetA are pivotal regulators of conidiophore development and conidium maturation. They act individually and together to regulate their own expression and that of numerous other sporulation-specific genes. The sequence is that of Developmental regulatory protein wetA from Penicillium camembertii.